The chain runs to 537 residues: Cytochrome P450 4F6 (537 aa).

Cys-468 lines the heme pocket.

The protein belongs to the cytochrome P450 family. The cofactor is heme. In terms of tissue distribution, high expression in liver and kidney. Lower expression in brain.

Its subcellular location is the endoplasmic reticulum membrane. It is found in the microsome membrane. The enzyme catalyses an organic molecule + reduced [NADPH--hemoprotein reductase] + O2 = an alcohol + oxidized [NADPH--hemoprotein reductase] + H2O + H(+). The protein is Cytochrome P450 4F6 (Cyp4f6) of Rattus norvegicus (Rat).